The primary structure comprises 241 residues: Orotidine 5'-phosphate decarboxylase (241 aa).

Residues Asp15, Lys37, 64–73 (DLKYHDIPNT), Thr126, Arg187, Gln196, Gly216, and Arg217 each bind substrate. Catalysis depends on Lys66, which acts as the Proton donor.

Belongs to the OMP decarboxylase family. Type 1 subfamily. Homodimer.

The catalysed reaction is orotidine 5'-phosphate + H(+) = UMP + CO2. It functions in the pathway pyrimidine metabolism; UMP biosynthesis via de novo pathway; UMP from orotate: step 2/2. Its function is as follows. Catalyzes the decarboxylation of orotidine 5'-monophosphate (OMP) to uridine 5'-monophosphate (UMP). In Geotalea uraniireducens (strain Rf4) (Geobacter uraniireducens), this protein is Orotidine 5'-phosphate decarboxylase.